The primary structure comprises 478 residues: Sugar transporter ERD6-like 15 (478 aa).

A run of 12 helical transmembrane segments spans residues 31–51, 67–87, 106–126, 129–149, 161–181, 185–205, 267–287, 305–325, 333–353, 366–386, 406–426, and 432–452; these read FVLA…IIGY, IADY…GALI, ILFV…LLDL, LLQG…ITEI, FAQL…TIVA, LAIL…FIPE, AFSL…GLNG, FGFI…TVLV, LLLV…ISFF, VLAL…MGSI, MCNL…SYLL, and GTFL…AKLV.

The protein belongs to the major facilitator superfamily. Sugar transporter (TC 2.A.1.1) family.

It localises to the membrane. Functionally, sugar transporter. This Arabidopsis thaliana (Mouse-ear cress) protein is Sugar transporter ERD6-like 15.